The chain runs to 156 residues: Small ribosomal subunit protein uS7 (156 aa).

It belongs to the universal ribosomal protein uS7 family. Part of the 30S ribosomal subunit. Contacts proteins S9 and S11.

In terms of biological role, one of the primary rRNA binding proteins, it binds directly to 16S rRNA where it nucleates assembly of the head domain of the 30S subunit. Is located at the subunit interface close to the decoding center, probably blocks exit of the E-site tRNA. The polypeptide is Small ribosomal subunit protein uS7 (Arthrospira platensis (Spirulina platensis)).